A 570-amino-acid polypeptide reads, in one-letter code: Probable glucomannan 4-beta-mannosyltransferase 11 (570 aa).

Residues 57 to 77 (LAMTVMILAEKLFVAAVCLAV) traverse the membrane as a helical segment. D157 is an active-site residue. Residues D216 and D218 each coordinate substrate. D310 is a catalytic residue. The next 4 helical transmembrane spans lie at 389–409 (IAAH…SVWL), 412–432 (IEIP…CKAV), 522–542 (YSEI…VLYA), and 548–568 (IFLF…IGVC).

This sequence belongs to the glycosyltransferase 2 family. Plant cellulose synthase-like A subfamily.

Its subcellular location is the golgi apparatus membrane. The enzyme catalyses GDP-mannose + (glucomannan)n = GDP + (glucomannan)n+1.. Its function is as follows. Probable mannan synthase which consists of a 4-beta-mannosyltransferase activity on mannan using GDP-mannose. The beta-1,4-mannan product is the backbone for galactomannan synthesis by galactomannan galactosyltransferase. Galactomannan is a noncellulosic polysaccharides of plant cell wall. The protein is Probable glucomannan 4-beta-mannosyltransferase 11 of Oryza sativa subsp. japonica (Rice).